We begin with the raw amino-acid sequence, 160 residues long: Small ribosomal subunit protein uS7 (160 aa).

The protein belongs to the universal ribosomal protein uS7 family. As to quaternary structure, part of the 30S ribosomal subunit. Contacts proteins S9 and S11.

Functionally, one of the primary rRNA binding proteins, it binds directly to 16S rRNA where it nucleates assembly of the head domain of the 30S subunit. Is located at the subunit interface close to the decoding center, probably blocks exit of the E-site tRNA. The polypeptide is Small ribosomal subunit protein uS7 (Rickettsia massiliae (strain Mtu5)).